The following is a 246-amino-acid chain: Ubiquinone biosynthesis O-methyltransferase (246 aa).

Residues Arg40, Gly70, Asp91, and Met135 each coordinate S-adenosyl-L-methionine.

This sequence belongs to the methyltransferase superfamily. UbiG/COQ3 family.

The enzyme catalyses a 3-demethylubiquinol + S-adenosyl-L-methionine = a ubiquinol + S-adenosyl-L-homocysteine + H(+). It catalyses the reaction a 3-(all-trans-polyprenyl)benzene-1,2-diol + S-adenosyl-L-methionine = a 2-methoxy-6-(all-trans-polyprenyl)phenol + S-adenosyl-L-homocysteine + H(+). It functions in the pathway cofactor biosynthesis; ubiquinone biosynthesis. Functionally, O-methyltransferase that catalyzes the 2 O-methylation steps in the ubiquinone biosynthetic pathway. The chain is Ubiquinone biosynthesis O-methyltransferase from Colwellia psychrerythraea (strain 34H / ATCC BAA-681) (Vibrio psychroerythus).